The following is a 533-amino-acid chain: CTP synthase (533 aa).

The amidoligase domain stretch occupies residues 1–269 (MKKNLKILVI…HEILSSKLNI (269 aa)). A CTP-binding site is contributed by Ser-16. Ser-16 lines the UTP pocket. ATP is bound by residues 17–22 (GIGKGV) and Asp-73. Residues Asp-73 and Glu-143 each coordinate Mg(2+). CTP contacts are provided by residues 150-152 (DME), 190-195 (KSKPTQ), and Lys-226. UTP is bound by residues 190–195 (KSKPTQ) and Lys-226. The Glutamine amidotransferase type-1 domain maps to 304–533 (YAELDDSYAS…LFLGLIKACI (230 aa)). Gly-355 contributes to the L-glutamine binding site. Cys-382 acts as the Nucleophile; for glutamine hydrolysis in catalysis. L-glutamine-binding positions include 383-386 (LGLQ), Glu-406, and Arg-466. Catalysis depends on residues His-511 and Glu-513.

Belongs to the CTP synthase family. Homotetramer.

It catalyses the reaction UTP + L-glutamine + ATP + H2O = CTP + L-glutamate + ADP + phosphate + 2 H(+). It carries out the reaction L-glutamine + H2O = L-glutamate + NH4(+). The catalysed reaction is UTP + NH4(+) + ATP = CTP + ADP + phosphate + 2 H(+). Its pathway is pyrimidine metabolism; CTP biosynthesis via de novo pathway; CTP from UDP: step 2/2. With respect to regulation, allosterically activated by GTP, when glutamine is the substrate; GTP has no effect on the reaction when ammonia is the substrate. The allosteric effector GTP functions by stabilizing the protein conformation that binds the tetrahedral intermediate(s) formed during glutamine hydrolysis. Inhibited by the product CTP, via allosteric rather than competitive inhibition. Functionally, catalyzes the ATP-dependent amination of UTP to CTP with either L-glutamine or ammonia as the source of nitrogen. Regulates intracellular CTP levels through interactions with the four ribonucleotide triphosphates. The polypeptide is CTP synthase (Borreliella afzelii (strain PKo) (Borrelia afzelii)).